Here is a 455-residue protein sequence, read N- to C-terminus: MTQIMTPKTIVHELERHIIGQNDAKKAVAIALRNRWRRMQLDNEMRQEVTPKNILMIGPTGVGKTEIARRLAKLADAPFIKVEATKFTEVGYVGKDVESIIRDLVETAVKMKREEAKEKVTEKAARLAEDRILDVLIPPARTSESKVGFANEPAEDAASKKEKENKTREIFRKKIQKGELDDKEIEIEVAVAPKTIGVMGPPGMEDMTSQLQDLFSSLSTDKKKNKKMRIKDAIKLAQDEEAAKLVNEEDIKARALEAVEQNGIVFLDEIDKVCRKSSNSGADVSREGVQRDLLPLVEGSTVSTKYGMIKTDHILFIASGAFHVAKPSDLIPELQGRLPIRVELKSLEIEDFVRILREPDCSILKQYIALMKTEGVDLSFEEDAIRKIAEIAYKVNEEVENIGARRLHTVMERLLEEISFDAPELVEKNINITTDYVNEKLGNLVKNKDLSQYIL.

Residues I19 and 61–66 (GVGKTE) contribute to the ATP site. A disordered region spans residues 144-163 (ESKVGFANEPAEDAASKKEK). Residues D268, E333, and R405 each coordinate ATP.

This sequence belongs to the ClpX chaperone family. HslU subfamily. As to quaternary structure, a double ring-shaped homohexamer of HslV is capped on each side by a ring-shaped HslU homohexamer. The assembly of the HslU/HslV complex is dependent on binding of ATP.

It is found in the cytoplasm. In terms of biological role, ATPase subunit of a proteasome-like degradation complex; this subunit has chaperone activity. The binding of ATP and its subsequent hydrolysis by HslU are essential for unfolding of protein substrates subsequently hydrolyzed by HslV. HslU recognizes the N-terminal part of its protein substrates and unfolds these before they are guided to HslV for hydrolysis. This is ATP-dependent protease ATPase subunit HslU from Francisella tularensis subsp. novicida (strain U112).